The sequence spans 425 residues: MMSVLKKICGSKNSLKSFDNEVYQSIEKELQRQKSQLQLIASENFASKAVMEAQGSFLTNKYAEGYPGKRYYCGCEHVDKIESLAIERLCKLFGVKFANVQPHSGSQANQAVFASLLTPGDTILGLSLSCGGHLTHGAAPSLSGKWFKSIQYTVNKDTYLLNMDEIEKLALEHKPKLIIAGASAYPRKMDFKRFREIADKVGAYLLADIAHYAGLIAAGEYPSPAEYAHVMTSTTHKTLRGPRGGIVMTNDEALHKKIQSAVFPGLQGGPLMHVIAAKAVAFKEALAPEFKTYSKKVVENAKVLAQELQKHGLDIITGGTDSHIVLVDLRSQKLTGKDVVDSLERAGITCNKNSVPFDTAKPTITSGLRFGTAAETTRGLEAENFKEIAGLINEVIQGLISGNSSSVEKAVKAKVERICSNFPIY.

Residues leucine 128 and 132 to 134 each bind (6S)-5,6,7,8-tetrahydrofolate; that span reads GHL. At lysine 237 the chain carries N6-(pyridoxal phosphate)lysine.

Belongs to the SHMT family. As to quaternary structure, homodimer. The cofactor is pyridoxal 5'-phosphate.

It is found in the cytoplasm. The catalysed reaction is (6R)-5,10-methylene-5,6,7,8-tetrahydrofolate + glycine + H2O = (6S)-5,6,7,8-tetrahydrofolate + L-serine. It participates in one-carbon metabolism; tetrahydrofolate interconversion. It functions in the pathway amino-acid biosynthesis; glycine biosynthesis; glycine from L-serine: step 1/1. Functionally, catalyzes the reversible interconversion of serine and glycine with tetrahydrofolate (THF) serving as the one-carbon carrier. This reaction serves as the major source of one-carbon groups required for the biosynthesis of purines, thymidylate, methionine, and other important biomolecules. Also exhibits THF-independent aldolase activity toward beta-hydroxyamino acids, producing glycine and aldehydes, via a retro-aldol mechanism. The chain is Serine hydroxymethyltransferase from Wolbachia pipientis wMel.